Here is a 140-residue protein sequence, read N- to C-terminus: MGTPVKILVVLFSVIVLLAVAQSSYLPPCEPVNETVAVEKEGCPKCLVLQTTICSGHCLTKEPVYKSPFSTVYQHVCTYRDVRYETVRLPDCPPGVDPHITYPVALSCDCSLCTMDTSDCTIESLQPDFCMSQREDFLVY.

A signal peptide spans 1 to 23 (MGTPVKILVVLFSVIVLLAVAQS). 6 cysteine pairs are disulfide-bonded: Cys29-Cys77, Cys43-Cys92, Cys46-Cys130, Cys54-Cys108, Cys58-Cys110, and Cys113-Cys120. N-linked (GlcNAc...) asparagine glycosylation is present at Asn33.

The protein belongs to the glycoprotein hormones subunit beta family. As to quaternary structure, heterodimer of an alpha and a beta chain.

It is found in the secreted. Its function is as follows. Involved in gametogenesis and steroidogenesis. The polypeptide is Gonadotropin subunit beta-2 (cgbb) (Carassius auratus (Goldfish)).